The following is a 183-amino-acid chain: Ribosome rescue factor SmrB (183 aa).

The Smr domain occupies 98-173; sequence LDLHGLTQLQ…GDAALLVLIE (76 aa).

The protein belongs to the SmrB family. As to quaternary structure, associates with collided ribosomes, but not with correctly translating polysomes.

Functionally, acts as a ribosome collision sensor. Detects stalled/collided disomes (pairs of ribosomes where the leading ribosome is stalled and a second ribosome has collided with it) and endonucleolytically cleaves mRNA at the 5' boundary of the stalled ribosome. Stalled/collided disomes form a new interface (primarily via the 30S subunits) that binds SmrB. Cleaved mRNA becomes available for tmRNA ligation, leading to ribosomal subunit dissociation and rescue of stalled ribosomes. The polypeptide is Ribosome rescue factor SmrB (Salmonella arizonae (strain ATCC BAA-731 / CDC346-86 / RSK2980)).